A 111-amino-acid chain; its full sequence is Somatostatin-1B (111 aa).

Positions Met1–Ala19 are cleaved as a signal peptide. A propeptide spanning residues Ala20–Arg87 is cleaved from the precursor. A disulfide bridge links Cys100 with Cys111.

This sequence belongs to the somatostatin family.

The protein resides in the secreted. Its function is as follows. Somatostatin inhibits the release of somatotropin. In Carassius auratus (Goldfish), this protein is Somatostatin-1B (sst1b).